We begin with the raw amino-acid sequence, 2835 residues long: Vanchrobactin synthetase VabF (2835 aa).

The condensation 1 stretch occupies residues 16-452 (EDQWPLIGTQ…IPPSEKQQIT (437 aa)). The adenylation 1 stretch occupies residues 473–880 (QQTVESKPNE…GRCDHQIKIR (408 aa)). One can recognise a Carrier 1 domain in the interval 988 to 1062 (APITQPEQLL…MMAGQMVPLQ (75 aa)). At Ser-1023 the chain carries O-(pantetheine 4'-phosphoryl)serine. Condensation regions lie at residues 1081–1499 (WFEE…KIQQ) and 1539–1961 (DVLP…EWDL). Residues 1992–2394 (QQQRSPHQLA…GRSDDQIKIR (403 aa)) are adenylation 2. The Carrier 2 domain maps to 2503 to 2578 (NAHPGLETQL…KLASLLLDDD (76 aa)). The residue at position 2538 (Ser-2538) is an O-(pantetheine 4'-phosphoryl)serine. Residues 2601-2821 (ALFCVNSASG…APENVRQIGE (221 aa)) form a thioesterase region.

The protein belongs to the NRP synthetase family. Requires pantetheine 4'-phosphate as cofactor.

The enzyme catalyses holo-[peptidyl-carrier protein] + L-arginine + ATP = L-arginyl-[peptidyl-carrier protein] + AMP + diphosphate. The catalysed reaction is holo-[peptidyl-carrier protein] + L-serine + ATP = L-seryl-[peptidyl-carrier protein] + AMP + diphosphate. It functions in the pathway siderophore biosynthesis. In terms of biological role, involved in the synthesis of the siderophore vanchrobactin. Probably adenylates L-arginine via its first adenylation domain and loads it onto its first peptidyl carrier domain via a thioester linkage to the phosphopanthetheine moiety. In addition, may adenylate L-serine via its second adenylation domain and loads it onto its second peptidyl carrier domain via a thioester linkage to the phosphopanthetheine moiety. The thioesterase domain may release vanchrobactin after condensation of the siderophore components. The protein is Vanchrobactin synthetase VabF of Vibrio anguillarum (Listonella anguillarum).